The chain runs to 247 residues: Aliphatic sulfonates import ATP-binding protein SsuB 3 (247 aa).

Positions 13 to 227 constitute an ABC transporter domain; that stretch reads VRVRGAGRAF…SVVDPEFSAL (215 aa). Residue 45-52 participates in ATP binding; it reads GASGSGKS.

It belongs to the ABC transporter superfamily. Aliphatic sulfonates importer (TC 3.A.1.17.2) family. In terms of assembly, the complex is composed of two ATP-binding proteins (SsuB), two transmembrane proteins (SsuC) and a solute-binding protein (SsuA).

The protein resides in the cell membrane. It carries out the reaction ATP + H2O + aliphatic sulfonate-[sulfonate-binding protein]Side 1 = ADP + phosphate + aliphatic sulfonateSide 2 + [sulfonate-binding protein]Side 1.. Its function is as follows. Part of the ABC transporter complex SsuABC involved in aliphatic sulfonates import. Responsible for energy coupling to the transport system. In Nocardia farcinica (strain IFM 10152), this protein is Aliphatic sulfonates import ATP-binding protein SsuB 3.